Consider the following 511-residue polypeptide: MNTLQLIFLLFFFPTLLFLYCLPYKRNQNHRRLPPSPPSFPIIGHLHHLGPLIHQSFHALSTRYGSLIHLRLGSVPCVVVSTPDLAKDFLKTNELAFSSRKHSLAIDHITYGVAFAFAPYGTYWKFIKKLFTVELLGTQNLSHFLPIRTHEIRELLRTLMVKSRAKERVNLTEELLKLTNNVISQMMMSIRCSGTNSEADEAKNLVREVTKIFGQFNVSDFIWFCKNIDLQGFKKRYEGTHRRYDALLERIIMGREENRRRGKIKDGEGKDFLDMLLDVLEDGKAEIKITRDHIKALILDFLTAGTDTTAIAIEWALVELINNPNALEKARQEIDQVIGDERLVQESDTPNLPYIQAIIKEALRLHPPIPMLIRKSTENVIVQGYDIPAGTLLFVNIWSIGRNPQCWETPLEFKPHRFLDGGDLKSSLDIKGHNFQLLPFGTGRRGCPGVNLAMRELSVVIANLIQCFDWDVVGERLLNTDERAGLTAPRAVDFVCVPLERGNTLKILGSN.

A helical membrane pass occupies residues 4 to 24; the sequence is LQLIFLLFFFPTLLFLYCLPY. Cys447 serves as a coordination point for heme.

This sequence belongs to the cytochrome P450 family. The cofactor is heme.

It localises to the membrane. It carries out the reaction a flavanone + reduced [NADPH--hemoprotein reductase] + O2 = a flavone + oxidized [NADPH--hemoprotein reductase] + 2 H2O + H(+). Its pathway is secondary metabolite biosynthesis; flavonoid biosynthesis. Functions as a flavone synthase II (FNSII) that catalyzes the direct conversion of flavanones to flavones. In vitro, can convert liquiritigenin, naringenin and eriodictyol to 7,4'-dihydroxyflavone, apigenin and luteolin, respectively. The sequence is that of Cytochrome P450 93B2 from Gerbera hybrida (Daisy).